A 95-amino-acid polypeptide reads, in one-letter code: MFGRLGAPEIILILVVIILLFGAKKLPDMARSLGKSARILKSEAKAMKSEAKADDAAPADPPNPEQSAAQRTIQAAPGDVTSSRPVTEPTDTTKR.

Residues 1 to 21 form a helical membrane-spanning segment; the sequence is MFGRLGAPEIILILVVIILLF. The segment covering 44–55 has biased composition (basic and acidic residues); it reads AKAMKSEAKADD. The segment at 44–95 is disordered; it reads AKAMKSEAKADDAAPADPPNPEQSAAQRTIQAAPGDVTSSRPVTEPTDTTKR.

It belongs to the TatA/E family. In terms of assembly, the Tat system comprises two distinct complexes: a TatABC complex, containing multiple copies of TatA, TatB and TatC subunits, and a separate TatA complex, containing only TatA subunits. Substrates initially bind to the TatABC complex, which probably triggers association of the separate TatA complex to form the active translocon.

The protein localises to the cell membrane. In terms of biological role, part of the twin-arginine translocation (Tat) system that transports large folded proteins containing a characteristic twin-arginine motif in their signal peptide across membranes. TatA could form the protein-conducting channel of the Tat system. This is Sec-independent protein translocase protein TatA from Streptomyces coelicolor (strain ATCC BAA-471 / A3(2) / M145).